We begin with the raw amino-acid sequence, 171 residues long: Myosin regulatory light polypeptide 9 (171 aa).

Residues 1–15 (MSSKRAKAKTTKKRP) show a composition bias toward basic residues. Residues 1–21 (MSSKRAKAKTTKKRPQSATSN) form a disordered region. Ser2 bears the N-acetylserine mark. Thr19 bears the Phosphothreonine; by MLCK, CIT and ROCK2 mark. Position 20 is a phosphoserine; by CDC42BP, CIT, MLCK, PAK1, ROCK1, ROCK2, DAPK1, DAPK2 and ZIPK/DAPK3 (Ser20). EF-hand domains follow at residues 29–64 (SQIQEFKEAFNMIDQNRDGFIDKEDLHDMLASLGKN) and 98–133 (DPEDVIRNAFACFDEEASGFIHEDHLRELLTTMGDR). 4 residues coordinate Ca(2+): Asp42, Asn44, Asp46, and Asp53.

As to quaternary structure, myosin is a hexamer of 2 heavy chains and 4 light chains: interacts with myosin heavy chain MYO19. Interacts with LUZP1; the interaction results in inhibition of phosphorylation of MYL9 by DAPK3. In terms of processing, phosphorylation increases the actin-activated myosin ATPase activity and thereby regulates the contractile activity. It is required to generate the driving force in the migration of the cells but not necessary for localization of myosin-2 at the leading edge. Phosphorylation is required for myotube formation. Phosphorylated by DAPK3; DAPK3-mediated phosphorylation is inhibited by LUZP1. Smooth muscle tissues and in some, but not all, nonmuscle cells.

It is found in the cytoplasm. It localises to the cytoskeleton. The protein localises to the cell cortex. Myosin regulatory subunit that plays an important role in regulation of both smooth muscle and nonmuscle cell contractile activity via its phosphorylation. Implicated in cytokinesis, receptor capping, and cell locomotion. In myoblasts, may regulate PIEZO1-dependent cortical actomyosin assembly involved in myotube formation. The polypeptide is Myosin regulatory light polypeptide 9 (Myl9) (Rattus norvegicus (Rat)).